The sequence spans 257 residues: Glucose-1-phosphate cytidylyltransferase (257 aa).

Residues 6–10 (LAGGL), 11–13 (GTR), lysine 23, serine 104, arginine 109, and glycine 128 each bind substrate. 2 residues coordinate Mg(2+): aspartate 129 and aspartate 234.

This sequence belongs to the glucose-1-phosphate cytidylyltransferase family. As to quaternary structure, homohexamer. The cofactor is Mg(2+).

The enzyme catalyses alpha-D-glucose 1-phosphate + CTP + H(+) = CDP-D-glucose + diphosphate. The protein operates within nucleotide-sugar biosynthesis; CDP-3,6-dideoxy-D-mannose biosynthesis; CDP-3,6-dideoxy-D-mannose from CTP and alpha-D-glucose 1-phosphate: step 1/5. Its pathway is bacterial outer membrane biogenesis; LPS O-antigen biosynthesis. Functionally, involved in the biosynthesis of the tyvelose, a 3,6-dideoxyhexose found in the O-antigen of the surface lipopolysaccharides. It catalyzes the transfer of a CMP moiety from CTP to glucose 1-phosphate. This enzyme can utilize either CTP or UTP as the nucleotide donor. In Salmonella typhi, this protein is Glucose-1-phosphate cytidylyltransferase (rfbF).